A 564-amino-acid polypeptide reads, in one-letter code: Urease subunit alpha (564 aa).

The Urease domain occupies 126–564 (GGIDTHIHFI…LPMAQRYFLF (439 aa)). Ni(2+) is bound by residues H131, H133, and K214. At K214 the chain carries N6-carboxylysine. Residue H216 participates in substrate binding. The Ni(2+) site is built by H243 and H269. Residue H317 is the Proton donor of the active site. D357 lines the Ni(2+) pocket.

Belongs to the metallo-dependent hydrolases superfamily. Urease alpha subunit family. As to quaternary structure, heterotrimer of UreA (gamma), UreB (beta) and UreC (alpha) subunits. Three heterotrimers associate to form the active enzyme. It depends on Ni cation as a cofactor. In terms of processing, carboxylation allows a single lysine to coordinate two nickel ions.

The protein localises to the cytoplasm. The catalysed reaction is urea + 2 H2O + H(+) = hydrogencarbonate + 2 NH4(+). The protein operates within nitrogen metabolism; urea degradation; CO(2) and NH(3) from urea (urease route): step 1/1. The polypeptide is Urease subunit alpha (Burkholderia pseudomallei (strain 1710b)).